A 254-amino-acid polypeptide reads, in one-letter code: Type III pantothenate kinase (254 aa).

6–13 (DLGNSAIK) is an ATP binding site. Substrate-binding positions include tyrosine 99 and 106-109 (GVDR). Aspartate 108 (proton acceptor) is an active-site residue. Residue aspartate 128 participates in K(+) binding. An ATP-binding site is contributed by threonine 131. Position 182 (threonine 182) interacts with substrate.

The protein belongs to the type III pantothenate kinase family. As to quaternary structure, homodimer. It depends on NH4(+) as a cofactor. K(+) serves as cofactor.

It localises to the cytoplasm. It catalyses the reaction (R)-pantothenate + ATP = (R)-4'-phosphopantothenate + ADP + H(+). It functions in the pathway cofactor biosynthesis; coenzyme A biosynthesis; CoA from (R)-pantothenate: step 1/5. Its function is as follows. Catalyzes the phosphorylation of pantothenate (Pan), the first step in CoA biosynthesis. The chain is Type III pantothenate kinase from Halorhodospira halophila (strain DSM 244 / SL1) (Ectothiorhodospira halophila (strain DSM 244 / SL1)).